The chain runs to 696 residues: DNA ligase (696 aa).

NAD(+) is bound by residues 36–40 (DAEYD), 85–86 (SL), and glutamate 123. Residue lysine 125 is the N6-AMP-lysine intermediate of the active site. Positions 146, 181, 319, and 343 each coordinate NAD(+). The Zn(2+) site is built by cysteine 437, cysteine 440, cysteine 455, and cysteine 461. Residues 618 to 696 (PEGTSLAGKT…EDGLKALLGL (79 aa)) form the BRCT domain.

This sequence belongs to the NAD-dependent DNA ligase family. LigA subfamily. Mg(2+) serves as cofactor. It depends on Mn(2+) as a cofactor.

The catalysed reaction is NAD(+) + (deoxyribonucleotide)n-3'-hydroxyl + 5'-phospho-(deoxyribonucleotide)m = (deoxyribonucleotide)n+m + AMP + beta-nicotinamide D-nucleotide.. Its function is as follows. DNA ligase that catalyzes the formation of phosphodiester linkages between 5'-phosphoryl and 3'-hydroxyl groups in double-stranded DNA using NAD as a coenzyme and as the energy source for the reaction. It is essential for DNA replication and repair of damaged DNA. In Bordetella bronchiseptica (strain ATCC BAA-588 / NCTC 13252 / RB50) (Alcaligenes bronchisepticus), this protein is DNA ligase.